We begin with the raw amino-acid sequence, 175 residues long: Disulfide bond formation protein B (175 aa).

Over 1-13 (MSKLVTFSQQRSA) the chain is Cytoplasmic. A helical transmembrane segment spans residues 14 to 30 (WLILMFSALGLEASALY). Over 31-48 (FQYVMLLDPCVMCIYIRV) the chain is Periplasmic. Cys40 and Cys43 are disulfide-bonded. A helical transmembrane segment spans residues 49–64 (AVLGLILAGLVGSIAP). Residues 65 to 71 (RFWIVRF) are Cytoplasmic-facing. The helical transmembrane segment at 72 to 89 (LGMSLWGVSSAWGAKLSF) threads the bilayer. The Periplasmic portion of the chain corresponds to 90 to 144 (ELYQMQANPSPFSTCSFYPEFPTWMPLDAWMPSIFMPTGMCSDIPWTMMSLSMTQ). The cysteines at positions 104 and 130 are disulfide-linked. The chain crosses the membrane as a helical span at residues 145–163 (WTLIAFVGYSIAFLLFIYP). Topologically, residues 164-175 (GLLYKKPTNPYS) are cytoplasmic.

It belongs to the DsbB family.

The protein localises to the cell inner membrane. Functionally, required for disulfide bond formation in some periplasmic proteins. Acts by oxidizing the DsbA protein. This Shewanella denitrificans (strain OS217 / ATCC BAA-1090 / DSM 15013) protein is Disulfide bond formation protein B.